Here is a 283-residue protein sequence, read N- to C-terminus: Ribosomal RNA small subunit methyltransferase I (283 aa).

This sequence belongs to the methyltransferase superfamily. RsmI family.

The protein resides in the cytoplasm. The catalysed reaction is cytidine(1402) in 16S rRNA + S-adenosyl-L-methionine = 2'-O-methylcytidine(1402) in 16S rRNA + S-adenosyl-L-homocysteine + H(+). In terms of biological role, catalyzes the 2'-O-methylation of the ribose of cytidine 1402 (C1402) in 16S rRNA. In Haemophilus influenzae (strain ATCC 51907 / DSM 11121 / KW20 / Rd), this protein is Ribosomal RNA small subunit methyltransferase I.